The sequence spans 192 residues: Xanthine phosphoribosyltransferase (192 aa).

2 residues coordinate xanthine: L20 and N27. 128-132 contacts 5-phospho-alpha-D-ribose 1-diphosphate; the sequence is ADGEA. K156 contacts xanthine.

The protein belongs to the purine/pyrimidine phosphoribosyltransferase family. Xpt subfamily. In terms of assembly, homodimer.

The protein localises to the cytoplasm. The enzyme catalyses XMP + diphosphate = xanthine + 5-phospho-alpha-D-ribose 1-diphosphate. It functions in the pathway purine metabolism; XMP biosynthesis via salvage pathway; XMP from xanthine: step 1/1. Functionally, converts the preformed base xanthine, a product of nucleic acid breakdown, to xanthosine 5'-monophosphate (XMP), so it can be reused for RNA or DNA synthesis. This Agathobacter rectalis (strain ATCC 33656 / DSM 3377 / JCM 17463 / KCTC 5835 / VPI 0990) (Eubacterium rectale) protein is Xanthine phosphoribosyltransferase.